Consider the following 150-residue polypeptide: Phosphopantetheine adenylyltransferase (150 aa).

Residue T15 coordinates substrate. ATP is bound by residues 15–16 and H23; that span reads TF. Substrate contacts are provided by I80 and R94. Residues 95-97, E105, and 130-136 each bind ATP; these read GIR and LENISSR.

The protein belongs to the bacterial CoaD family. As to quaternary structure, homohexamer. Requires Mg(2+) as cofactor.

It localises to the cytoplasm. It carries out the reaction (R)-4'-phosphopantetheine + ATP + H(+) = 3'-dephospho-CoA + diphosphate. Its pathway is cofactor biosynthesis; coenzyme A biosynthesis; CoA from (R)-pantothenate: step 4/5. Its function is as follows. Reversibly transfers an adenylyl group from ATP to 4'-phosphopantetheine, yielding dephospho-CoA (dPCoA) and pyrophosphate. The polypeptide is Phosphopantetheine adenylyltransferase (Malacoplasma penetrans (strain HF-2) (Mycoplasma penetrans)).